The chain runs to 46 residues: Defensin-1 (46 aa).

Disulfide bonds link Cys3-Cys46, Cys14-Cys35, Cys20-Cys40, and Cys24-Cys42.

It belongs to the DEFL family. In terms of tissue distribution, epidermis and vascular bundles of pods, stems, roots, leaves and wet or dry seeds.

In terms of biological role, possesses antifungal activity sensitive to inorganic cations. The polypeptide is Defensin-1 (Pisum sativum (Garden pea)).